Here is a 117-residue protein sequence, read N- to C-terminus: Synaptobrevin homolog 1 (117 aa).

The interval 1-30 (MSSSTPFDPYALSEHDEERPQNVQSKSRTA) is disordered. The Cytoplasmic segment spans residues 1-94 (MSSSTPFDPY…MWYKDLKMKM (94 aa)). The v-SNARE coiled-coil homology domain maps to 28 to 88 (RTAELQAEID…NRVRKAMWYK (61 aa)). Lys63 is covalently cross-linked (Glycyl lysine isopeptide (Lys-Gly) (interchain with G-Cter in ubiquitin)). Cys95 carries the S-palmitoyl cysteine lipid modification. Residues 95 to 111 (CLALVIIILLVVIIVPI) form a helical; Anchor for type IV membrane protein membrane-spanning segment. Residues 112 to 117 (AVHFSR) are Vesicular-facing.

This sequence belongs to the synaptobrevin family. Palmitoylated by SWF1.

It localises to the endomembrane system. SNC1 and SNC2 are vesicle-targeting proteins essential for normal secretory traffic between the Golgi and the plasma membrane. They may also be involved in vesicle fusion. This Saccharomyces cerevisiae (strain ATCC 204508 / S288c) (Baker's yeast) protein is Synaptobrevin homolog 1 (SNC1).